We begin with the raw amino-acid sequence, 299 residues long: Coenzyme PQQ synthesis protein B (299 aa).

Belongs to the PqqB family.

The protein operates within cofactor biosynthesis; pyrroloquinoline quinone biosynthesis. May be involved in the transport of PQQ or its precursor to the periplasm. The chain is Coenzyme PQQ synthesis protein B from Methylorubrum extorquens (strain CM4 / NCIMB 13688) (Methylobacterium extorquens).